The following is a 397-amino-acid chain: Succinate--CoA ligase [ADP-forming] subunit beta (397 aa).

An ATP-grasp domain is found at 9–254; that stretch reads KALLKGYGAP…ETEEDAKEIE (246 aa). Residues Lys46, 53-55, Glu109, Ala112, and Glu117 each bind ATP; that span reads GRG. The Mg(2+) site is built by Asn209 and Asp223. Residues Asn274 and 331 to 333 each bind substrate; that span reads GIM.

The protein belongs to the succinate/malate CoA ligase beta subunit family. In terms of assembly, heterotetramer of two alpha and two beta subunits. The cofactor is Mg(2+).

The enzyme catalyses succinate + ATP + CoA = succinyl-CoA + ADP + phosphate. It catalyses the reaction GTP + succinate + CoA = succinyl-CoA + GDP + phosphate. It participates in carbohydrate metabolism; tricarboxylic acid cycle; succinate from succinyl-CoA (ligase route): step 1/1. In terms of biological role, succinyl-CoA synthetase functions in the citric acid cycle (TCA), coupling the hydrolysis of succinyl-CoA to the synthesis of either ATP or GTP and thus represents the only step of substrate-level phosphorylation in the TCA. The beta subunit provides nucleotide specificity of the enzyme and binds the substrate succinate, while the binding sites for coenzyme A and phosphate are found in the alpha subunit. The sequence is that of Succinate--CoA ligase [ADP-forming] subunit beta from Rhizobium leguminosarum bv. trifolii (strain WSM2304).